A 119-amino-acid polypeptide reads, in one-letter code: Large ribosomal subunit protein uL14 (119 aa).

It belongs to the universal ribosomal protein uL14 family. As to quaternary structure, part of the 50S ribosomal subunit. Forms a cluster with proteins L3 and L19. In the 70S ribosome, L14 and L19 interact and together make contacts with the 16S rRNA in bridges B5 and B8.

In terms of biological role, binds to 23S rRNA. Forms part of two intersubunit bridges in the 70S ribosome. This is Large ribosomal subunit protein uL14 from Wolbachia sp. subsp. Brugia malayi (strain TRS).